A 365-amino-acid polypeptide reads, in one-letter code: Outer membrane protein assembly factor BamC (365 aa).

The signal sequence occupies residues 1-16 (MLKKVTPLFLVAAVAA). Cys-17 carries N-palmitoyl cysteine lipidation. The S-diacylglycerol cysteine moiety is linked to residue Cys-17.

The protein belongs to the BamC family. In terms of assembly, part of the Bam complex.

Its subcellular location is the cell outer membrane. Part of the outer membrane protein assembly complex, which is involved in assembly and insertion of beta-barrel proteins into the outer membrane. The polypeptide is Outer membrane protein assembly factor BamC (Shewanella oneidensis (strain ATCC 700550 / JCM 31522 / CIP 106686 / LMG 19005 / NCIMB 14063 / MR-1)).